The sequence spans 742 residues: Synaptic vesicle glycoprotein 2A (742 aa).

Residues 1–57 (MEEGFRDRAAFIRGAKDIAKEVKKHAAKKVVKGLDRVQDEYSRRSYSRFEEEDDDDD) are interaction with SYT1. Topologically, residues 1-169 (MEEGFRDRAA…GHGRFQWTLY (169 aa)) are cytoplasmic. Residues 33–49 (GLDRVQDEYSRRSYSRF) are compositionally biased toward basic and acidic residues. The segment at 33 to 144 (GLDRVQDEYS…GRGEAQRRKE (112 aa)) is disordered. Phosphoserine occurs at positions 80 and 81. Residue Thr84 is modified to Phosphothreonine. Over residues 122-137 (VRGGLSDGEGPPGGRG) the composition is skewed to gly residues. Phosphoserine is present on Ser127. The chain crosses the membrane as a helical span at residues 170–190 (FVLGLALMADGVEVFVVGFVL). The Extracellular segment spans residues 191–205 (PSAEKDMCLSDSNKG). A helical transmembrane segment spans residues 206–226 (MLGLIVYLGMMVGAFLWGGLA). Residues 227–233 (DRLGRRQ) are Cytoplasmic-facing. The chain crosses the membrane as a helical span at residues 234-254 (CLLISLSVNSVFAFFSSFVQG). The Extracellular segment spans residues 255-262 (YGTFLFCR). Residues 263 to 283 (LLSGVGIGGSIPIVFSYFSEF) traverse the membrane as a helical segment. Topologically, residues 284-294 (LAQEKRGEHLS) are cytoplasmic. The chain crosses the membrane as a helical span at residues 295–315 (WLCMFWMIGGVYAAAMAWAII). Topologically, residues 316-334 (PHYGWSFQMGSAYQFHSWR) are extracellular. The chain crosses the membrane as a helical span at residues 335 to 355 (VFVLVCAFPSVFAIGALTTQP). Topologically, residues 356-447 (ESPRFFLENG…CFGPEYRRIT (92 aa)) are cytoplasmic. Ser393 bears the Phosphoserine mark. Residues 448–468 (LMMMGVWFTMSFSYYGLTVWF) form a helical membrane-spanning segment. Residues 469 to 598 (PDMIRHLQAV…GTGEGAYMVY (130 aa)) lie on the Extracellular side of the membrane. Position 480 is a phosphotyrosine (Tyr480). Asn498, Asn548, and Asn573 each carry an N-linked (GlcNAc...) asparagine glycan. The chain crosses the membrane as a helical span at residues 599–619 (FVSFLGTLAVLPGNIVSALLM). Residues 620 to 626 (DKIGRLR) are Cytoplasmic-facing. The helical transmembrane segment at 627-647 (MLAGSSVMSCVSCFFLSFGNS) threads the bilayer. Residues 648 to 651 (ESAM) lie on the Extracellular side of the membrane. A helical membrane pass occupies residues 652 to 672 (IALLCLFGGVSIASWNALDVL). At 673 to 685 (TVELYPSDKRTTA) the chain is on the cytoplasmic side. A helical membrane pass occupies residues 686–708 (FGFLNALCKLAAVLGISIFTSFV). Residues 709–712 (GITK) lie on the Extracellular side of the membrane. Residues 713-731 (AAPILFASAALALGSSLAL) form a helical membrane-spanning segment. At 732 to 742 (KLPETRGQVLQ) the chain is on the cytoplasmic side.

Belongs to the major facilitator superfamily. In terms of assembly, interacts with SYT1/synaptotagmin-1 in a calcium-dependent manner. Binds the adapter protein complex AP-2. As to quaternary structure, (Microbial infection) Interacts with C.botulinum neurotoxin type A2 (BoNT/A, botA). Interaction is improved by glycosylation of SV2. Post-translationally, phosphorylation by CK1 of the N-terminal cytoplasmic domain regulates interaction with SYT1. N-glycosylated.

It is found in the presynapse. The protein resides in the cytoplasmic vesicle. The protein localises to the secretory vesicle. It localises to the synaptic vesicle membrane. In terms of biological role, plays a role in the control of regulated secretion in neural and endocrine cells, enhancing selectively low-frequency neurotransmission. Positively regulates vesicle fusion by maintaining the readily releasable pool of secretory vesicles. Its function is as follows. (Microbial infection) Receptor for the C.botulinum neurotoxin type A2 (BoNT/A, botA); glycosylation is not essential but enhances the interaction. Probably also serves as a receptor for the closely related C.botulinum neurotoxin type A1. The protein is Synaptic vesicle glycoprotein 2A (SV2A) of Homo sapiens (Human).